A 100-amino-acid chain; its full sequence is Large ribosomal subunit protein eL21 (100 aa).

The protein belongs to the eukaryotic ribosomal protein eL21 family.

The chain is Large ribosomal subunit protein eL21 from Pyrobaculum arsenaticum (strain DSM 13514 / JCM 11321 / PZ6).